A 328-amino-acid chain; its full sequence is NADH-quinone oxidoreductase subunit H (328 aa).

A run of 8 helical transmembrane segments spans residues I10–F30, I80–P100, I118–G138, A155–V175, I191–F211, L243–F263, L272–T292, and W306–V326.

This sequence belongs to the complex I subunit 1 family. In terms of assembly, NDH-1 is composed of 14 different subunits. Subunits NuoA, H, J, K, L, M, N constitute the membrane sector of the complex.

It localises to the cell inner membrane. It catalyses the reaction a quinone + NADH + 5 H(+)(in) = a quinol + NAD(+) + 4 H(+)(out). Functionally, NDH-1 shuttles electrons from NADH, via FMN and iron-sulfur (Fe-S) centers, to quinones in the respiratory chain. The immediate electron acceptor for the enzyme in this species is believed to be ubiquinone. Couples the redox reaction to proton translocation (for every two electrons transferred, four hydrogen ions are translocated across the cytoplasmic membrane), and thus conserves the redox energy in a proton gradient. This subunit may bind ubiquinone. This Sulfurimonas denitrificans (strain ATCC 33889 / DSM 1251) (Thiomicrospira denitrificans (strain ATCC 33889 / DSM 1251)) protein is NADH-quinone oxidoreductase subunit H.